A 132-amino-acid chain; its full sequence is Phosphoribosyl-AMP cyclohydrolase (132 aa).

Asp85 lines the Mg(2+) pocket. A Zn(2+)-binding site is contributed by Cys86. Residues Asp87 and Asp89 each contribute to the Mg(2+) site. 2 residues coordinate Zn(2+): Cys102 and Cys109.

It belongs to the PRA-CH family. In terms of assembly, homodimer. Requires Mg(2+) as cofactor. It depends on Zn(2+) as a cofactor.

It is found in the cytoplasm. It carries out the reaction 1-(5-phospho-beta-D-ribosyl)-5'-AMP + H2O = 1-(5-phospho-beta-D-ribosyl)-5-[(5-phospho-beta-D-ribosylamino)methylideneamino]imidazole-4-carboxamide. The protein operates within amino-acid biosynthesis; L-histidine biosynthesis; L-histidine from 5-phospho-alpha-D-ribose 1-diphosphate: step 3/9. Its function is as follows. Catalyzes the hydrolysis of the adenine ring of phosphoribosyl-AMP. The protein is Phosphoribosyl-AMP cyclohydrolase of Frankia alni (strain DSM 45986 / CECT 9034 / ACN14a).